Consider the following 186-residue polypeptide: Elongation factor P (186 aa).

The protein belongs to the elongation factor P family.

Its subcellular location is the cytoplasm. It functions in the pathway protein biosynthesis; polypeptide chain elongation. Involved in peptide bond synthesis. Stimulates efficient translation and peptide-bond synthesis on native or reconstituted 70S ribosomes in vitro. Probably functions indirectly by altering the affinity of the ribosome for aminoacyl-tRNA, thus increasing their reactivity as acceptors for peptidyl transferase. This chain is Elongation factor P, found in Prochlorococcus marinus (strain MIT 9303).